The sequence spans 335 residues: UPF0324 membrane protein LMOf2365_2179 (335 aa).

8 consecutive transmembrane segments (helical) span residues 10 to 28 (TFWYGIALTFCIATLSYFL), 33 to 55 (FLMILGQLVTAILIGIIIRALFP), 91 to 113 (AGWRVFLIAALCLSFGITIVYFL), 123 to 142 (LAILVACGTGICGAAAVVAI), 155 to 177 (VAATIIALLGTIFTVIYTLIYPI), 251 to 270 (VPWFIFGFLATSAINSFGII), 277 to 299 (FLVICAYFLIAMSMGGLGLNVHL), and 309 to 331 (PFAAALIGSVFLSAFGLALVLLF).

Belongs to the UPF0324 family.

Its subcellular location is the cell membrane. The sequence is that of UPF0324 membrane protein LMOf2365_2179 from Listeria monocytogenes serotype 4b (strain F2365).